The primary structure comprises 431 residues: Enolase (431 aa).

Q168 contacts (2R)-2-phosphoglycerate. The Proton donor role is filled by E210. Residues D247, E291, and D318 each contribute to the Mg(2+) site. (2R)-2-phosphoglycerate contacts are provided by K343, R372, S373, and K394. K343 serves as the catalytic Proton acceptor.

This sequence belongs to the enolase family. In terms of assembly, component of the RNA degradosome, a multiprotein complex involved in RNA processing and mRNA degradation. It depends on Mg(2+) as a cofactor.

The protein resides in the cytoplasm. It is found in the secreted. It localises to the cell surface. It catalyses the reaction (2R)-2-phosphoglycerate = phosphoenolpyruvate + H2O. Its pathway is carbohydrate degradation; glycolysis; pyruvate from D-glyceraldehyde 3-phosphate: step 4/5. Catalyzes the reversible conversion of 2-phosphoglycerate (2-PG) into phosphoenolpyruvate (PEP). It is essential for the degradation of carbohydrates via glycolysis. This Acinetobacter baylyi (strain ATCC 33305 / BD413 / ADP1) protein is Enolase.